The sequence spans 414 residues: Serpin A12 (414 aa).

The first 20 residues, 1–20 (MNPTLGLAIFLAVLLTVKGL), serve as a signal peptide directing secretion. Asparagine 221 and asparagine 233 each carry an N-linked (GlcNAc...) (complex) asparagine glycan. N-linked (GlcNAc...) (high mannose) asparagine glycosylation occurs at asparagine 267. The tract at residues 364–382 (GTEGAAGTGAQTLPMETPL) is reactive center loop.

This sequence belongs to the serpin family. As to quaternary structure, forms a stable complex with KLK7. Glycosylation slightly decreases affinity for heparin, but otherwise has no significant effect on KLK7 inhibitory activity or thermal stability of the protein. Expressed in visceral adipose tissues.

It is found in the secreted. With respect to regulation, inhibition of KLK7 is enhanced by heparin. Functionally, adipokine that modulates insulin action by specifically inhibiting its target protease KLK7 in white adipose tissues. In Homo sapiens (Human), this protein is Serpin A12 (SERPINA12).